Consider the following 305-residue polypeptide: tRNA-cytidine(32) 2-sulfurtransferase (305 aa).

The segment at 1–20 (MTAVLPLPHPLADPAPRDPR) is disordered. The PP-loop motif signature appears at 59 to 64 (SGGKDS). The [4Fe-4S] cluster site is built by C134, C137, and C225. The segment covering 282–293 (DAPPDLAPDPGA) has biased composition (low complexity). Residues 282–305 (DAPPDLAPDPGAWLTASDATHDSD) form a disordered region.

The protein belongs to the TtcA family. In terms of assembly, homodimer. Requires Mg(2+) as cofactor. [4Fe-4S] cluster serves as cofactor.

It is found in the cytoplasm. It catalyses the reaction cytidine(32) in tRNA + S-sulfanyl-L-cysteinyl-[cysteine desulfurase] + AH2 + ATP = 2-thiocytidine(32) in tRNA + L-cysteinyl-[cysteine desulfurase] + A + AMP + diphosphate + H(+). It participates in tRNA modification. In terms of biological role, catalyzes the ATP-dependent 2-thiolation of cytidine in position 32 of tRNA, to form 2-thiocytidine (s(2)C32). The sulfur atoms are provided by the cysteine/cysteine desulfurase (IscS) system. The sequence is that of tRNA-cytidine(32) 2-sulfurtransferase from Xanthomonas oryzae pv. oryzae (strain MAFF 311018).